The following is a 170-amino-acid chain: Alpha-crystallin A chain (170 aa).

An N-acetylmethionine modification is found at M1. Positions 1–63 (MDVTIQQPWF…RTALDSGISE (63 aa)) are required for complex formation with BFSP1 and BFSP2. Deamidated glutamine; partial is present on Q6. S45 is subject to Phosphoserine. A Deamidated glutamine; partial modification is found at Q50. Residues 52–161 (LFRTALDSGI…SERPIPVSRE (110 aa)) form the sHSP domain. 2 positions are modified to N6-acetyllysine: K70 and K99. H100 contributes to the Zn(2+) binding site. Deamidated asparagine; partial is present on N101. Zn(2+) is bound by residues E102, H107, and H151. Residues 144–170 (PKIVDPSHSERPIPVSREEKPSSAPSS) form a disordered region. The segment covering 148 to 164 (DPSHSERPIPVSREEKP) has biased composition (basic and acidic residues). S159 carries O-linked (GlcNAc) serine glycosylation.

Belongs to the small heat shock protein (HSP20) family. As to quaternary structure, heteromer composed of three CRYAA and one CRYAB subunits. Inter-subunit bridging via zinc ions enhances stability, which is crucial as there is no protein turn over in the lens. Can also form homodimers and homotetramers (dimers of dimers) which serve as the building blocks of homooligomers. Within homooligomers, the zinc-binding motif is created from residues of 3 different molecules. His-100 and Glu-102 from one molecule are ligands of the zinc ion, and His-107 and His-151 residues from additional molecules complete the site with tetrahedral coordination geometry. Part of a complex required for lens intermediate filament formation composed of BFSP1, BFSP2 and CRYAA. Post-translationally, acetylation at Lys-70 may increase chaperone activity. Undergoes age-dependent proteolytical cleavage at the C-terminus.

It is found in the cytoplasm. The protein resides in the nucleus. Contributes to the transparency and refractive index of the lens. Acts as a chaperone, preventing aggregation of various proteins under a wide range of stress conditions. Required for the correct formation of lens intermediate filaments as part of a complex composed of BFSP1, BFSP2 and CRYAA. This Bradypus variegatus (Brown-throated three-fingered sloth) protein is Alpha-crystallin A chain (CRYAA).